Consider the following 64-residue polypeptide: uncharacterized protein (64 aa).

Residues 35-64 (TIRKPPIEHAAGPLGSTSRAGHRSYGGVAS) are disordered.

This is an uncharacterized protein from Mycobacterium tuberculosis (strain ATCC 25618 / H37Rv).